We begin with the raw amino-acid sequence, 687 residues long: Cytochrome b/c1 (687 aa).

The helical transmembrane segment at 46 to 66 (FGAILSFMLGMQILTGVILAM) threads the bilayer. 2 residues coordinate heme b: His96 and His110. 2 consecutive transmembrane segments (helical) span residues 126-146 (VLWILGVIIYLLMMATGFMGY) and 160-180 (VITNLFSAIPYFGESIVTLLW). Heme b is bound by residues His197 and His211. Helical transmembrane passes span 199-219 (LLPFLIAGVVVLHVWALHVAG), 247-267 (FGVACFLLLYAWFIFYMPNYL), 305-325 (LAGVIGMFSAIIILCFLPWLD), 337-357 (LAKQFFWIFVAVCILLGYLGA), 363-383 (IYVIAGRVLTVCYFAYFLIVL), and 410-430 (AVASVAIALVAAGALFLGSLQ). The tract at residues 404-434 (LAKGGKAVASVAIALVAAGALFLGSLQDARA) is internal signal sequence. Residues 458-643 (GALQRGLKVY…TVAQYSKDVT (186 aa)) enclose the Cytochrome c domain. Residues Cys471, Cys474, His475, and Met616 each coordinate heme c. The chain crosses the membrane as a helical span at residues 666–678 (VFLIIFAGLMYFT).

Belongs to the cytochrome b family. As to quaternary structure, the main subunits of complex b-c1 are: cytochrome b, cytochrome c1 and the Rieske protein. Heme b serves as cofactor. The cofactor is heme c. The protein is post-translationally processed into cytochrome b and c1. This occurs by processing between residues 434 and 435 without processing between cytochrome b and the N-terminal of the putative signal sequence domain.

The protein localises to the cell inner membrane. In terms of biological role, component of the ubiquinol-cytochrome c reductase complex (complex III or cytochrome b-c1 complex), which is a respiratory chain that generates an electrochemical potential coupled to ATP synthesis. c1 functions as an electron donor to cytochrome c. This is Cytochrome b/c1 (fbcH) from Bradyrhizobium diazoefficiens (strain JCM 10833 / BCRC 13528 / IAM 13628 / NBRC 14792 / USDA 110).